The sequence spans 151 residues: Ribosome maturation factor RimP (151 aa).

It belongs to the RimP family.

The protein resides in the cytoplasm. Required for maturation of 30S ribosomal subunits. In Vibrio atlanticus (strain LGP32) (Vibrio splendidus (strain Mel32)), this protein is Ribosome maturation factor RimP.